Consider the following 155-residue polypeptide: Ribosomal RNA large subunit methyltransferase H (155 aa).

Residues Leu73, Gly104, and 123 to 128 (LSALTL) contribute to the S-adenosyl-L-methionine site.

It belongs to the RNA methyltransferase RlmH family. In terms of assembly, homodimer.

It is found in the cytoplasm. It catalyses the reaction pseudouridine(1915) in 23S rRNA + S-adenosyl-L-methionine = N(3)-methylpseudouridine(1915) in 23S rRNA + S-adenosyl-L-homocysteine + H(+). Its function is as follows. Specifically methylates the pseudouridine at position 1915 (m3Psi1915) in 23S rRNA. In Chromohalobacter salexigens (strain ATCC BAA-138 / DSM 3043 / CIP 106854 / NCIMB 13768 / 1H11), this protein is Ribosomal RNA large subunit methyltransferase H.